A 155-amino-acid polypeptide reads, in one-letter code: 3-hydroxyacyl-[acyl-carrier-protein] dehydratase FabZ (155 aa).

The active site involves histidine 57.

This sequence belongs to the thioester dehydratase family. FabZ subfamily.

The protein localises to the cytoplasm. It catalyses the reaction a (3R)-hydroxyacyl-[ACP] = a (2E)-enoyl-[ACP] + H2O. Involved in unsaturated fatty acids biosynthesis. Catalyzes the dehydration of short chain beta-hydroxyacyl-ACPs and long chain saturated and unsaturated beta-hydroxyacyl-ACPs. This Cereibacter sphaeroides (strain KD131 / KCTC 12085) (Rhodobacter sphaeroides) protein is 3-hydroxyacyl-[acyl-carrier-protein] dehydratase FabZ.